A 51-amino-acid chain; its full sequence is Large ribosomal subunit protein eL39 (51 aa).

It belongs to the eukaryotic ribosomal protein eL39 family.

The chain is Large ribosomal subunit protein eL39 from Pyrobaculum islandicum (strain DSM 4184 / JCM 9189 / GEO3).